The following is a 420-amino-acid chain: UDP-N-acetylglucosamine 1-carboxyvinyltransferase (420 aa).

Lys22–Asn23 provides a ligand contact to phosphoenolpyruvate. Arg91 is a UDP-N-acetyl-alpha-D-glucosamine binding site. Cys115 (proton donor) is an active-site residue. Cys115 carries the post-translational modification 2-(S-cysteinyl)pyruvic acid O-phosphothioketal. Residues Arg120–Leu124, Lys160–Val163, Asp305, and Ile327 contribute to the UDP-N-acetyl-alpha-D-glucosamine site.

It belongs to the EPSP synthase family. MurA subfamily.

It is found in the cytoplasm. The enzyme catalyses phosphoenolpyruvate + UDP-N-acetyl-alpha-D-glucosamine = UDP-N-acetyl-3-O-(1-carboxyvinyl)-alpha-D-glucosamine + phosphate. The protein operates within cell wall biogenesis; peptidoglycan biosynthesis. Cell wall formation. Adds enolpyruvyl to UDP-N-acetylglucosamine. This is UDP-N-acetylglucosamine 1-carboxyvinyltransferase from Erwinia tasmaniensis (strain DSM 17950 / CFBP 7177 / CIP 109463 / NCPPB 4357 / Et1/99).